Reading from the N-terminus, the 449-residue chain is POU domain, class 5, transcription factor 1.1 (449 aa).

Disordered stretches follow at residues 79–125 and 170–233; these read ENNQ…SPPN and YPTP…PSES. The span at 97–110 shows a compositional bias: basic and acidic residues; the sequence is SRIKVKEEVVHETD. Positions 170 to 180 are enriched in polar residues; sequence YPTPANQSPNT. The span at 187 to 199 shows a compositional bias: low complexity; the sequence is SSMESSRCSSTNS. Over residues 224-233 the composition is skewed to acidic residues; the sequence is DNEEEVPSES. Residues 227-301 enclose the POU-specific domain; the sequence is EEVPSESEME…FLERWVVEAE (75 aa). A DNA-binding region (homeobox) is located at residues 321–380; the sequence is KRKRRTNIENIVKGTLESYFMKCPKPGAQEMVQIAKELNMDKDVVRVWFCNRRQKGKRQG.

The protein belongs to the POU transcription factor family. Class-5 subfamily. Interacts with components of the transcription complex that assembles on the vent2-B gene, including vent2 (via C-terminus), smad1 and smad4. Forms a repression complex on the promoters of the gsc and mix2 genes via interactions with the nodal/activin signaling pathway transducers foxh1/fast1, gtf2ird1/wbscr11 and smad2. Forms a repression complex on the promoters of the nodal/nr1 and siamois genes with the maternal factors tcf7l1/tcf3 and vegt. In terms of tissue distribution, highly enriched within the animal half of developing embryos within ectodermal and mesodermal regions. Expressed in the neuroectoderm at the early neurula stage, with expression initially extending to the future hindbrain/midbrain boundary, but later shifting toward the posterior pole where it persists within the tip of the tail in hatching embryos. Expressed at very low levels in the adult kidney.

It is found in the nucleus. Functionally, transcription factor that binds to the octamer motif (5'-ATTTGCAT-3'). Activates transcription when directly bound to the octamer DNA sequence, but can form repression complexes with other proteins at the promoter site to inhibit transcription. Binds to the promoter of the vent2-B gene to activate transcription when in the presence of other BMP signaling factors also bound to the promoter. Inhibits the competence of ectodermal cells to respond to BMP during embryogenesis thereby inhibiting epidermal differentiation and promoting neural induction. Antagonizes the activity of nodal/activin signaling by forming a transcriptional repression complex on the gsc and mix2 gene promoters to inhibit their transcription, and thus maintain the undifferentiated state of embryonic cells to prevent them from differentiating prematurely. Acts maternally to inhibit vegt and beta-catenin-activated gene transcription by forming a transcriptional repression complex on the nodal/nr1 and siamois promoters to inhibit their transcription. The polypeptide is POU domain, class 5, transcription factor 1.1 (pou5f1.1) (Xenopus laevis (African clawed frog)).